Here is a 510-residue protein sequence, read N- to C-terminus: NAD(P)H-quinone oxidoreductase subunit 2 A, chloroplastic (510 aa).

A run of 13 helical transmembrane segments spans residues 24–44 (LLLF…GLIL), 57–77 (IPWL…ALLF), 99–119 (IFQF…VEYI), 124–144 (MAIT…MFLC), 149–169 (LITI…LSGY), 183–203 (YLLM…WLYG), 227–247 (PGIS…LSPA), 295–315 (WHLL…LIAI), 323–343 (MLAY…IVGD), 354–374 (YMLF…LFGL), 395–415 (ALSL…AGFF), 418–438 (LYLF…IGLL), and 484–504 (MIVC…IIAI).

This sequence belongs to the complex I subunit 2 family. As to quaternary structure, NDH is composed of at least 16 different subunits, 5 of which are encoded in the nucleus.

It localises to the plastid. It is found in the chloroplast thylakoid membrane. It catalyses the reaction a plastoquinone + NADH + (n+1) H(+)(in) = a plastoquinol + NAD(+) + n H(+)(out). The enzyme catalyses a plastoquinone + NADPH + (n+1) H(+)(in) = a plastoquinol + NADP(+) + n H(+)(out). Functionally, NDH shuttles electrons from NAD(P)H:plastoquinone, via FMN and iron-sulfur (Fe-S) centers, to quinones in the photosynthetic chain and possibly in a chloroplast respiratory chain. The immediate electron acceptor for the enzyme in this species is believed to be plastoquinone. Couples the redox reaction to proton translocation, and thus conserves the redox energy in a proton gradient. The polypeptide is NAD(P)H-quinone oxidoreductase subunit 2 A, chloroplastic (Solanum tuberosum (Potato)).